The chain runs to 368 residues: Ribulose bisphosphate carboxylase-like protein 1 (368 aa).

The protein belongs to the RuBisCO large chain family. Type IV subfamily.

Functionally, unknown. Probably does not have RuBisCO activity. The sequence is that of Ribulose bisphosphate carboxylase-like protein 1 (rlp1) from Rhodopseudomonas palustris (strain ATCC BAA-98 / CGA009).